The chain runs to 204 residues: Transcriptional regulator GfcR (204 aa).

Belongs to the purine/pyrimidine phosphoribosyltransferase family. GfcR subfamily.

The chain is Transcriptional regulator GfcR from Methanoculleus marisnigri (strain ATCC 35101 / DSM 1498 / JR1).